Consider the following 580-residue polypeptide: Frizzled and smoothened-like protein K (580 aa).

An N-terminal signal peptide occupies residues 1-18; sequence MRVLFILFLFYFYTYTEA. Residues 19-236 are Extracellular-facing; the sequence is QQYYPIDPTG…QWDNIFDTSD (218 aa). The 130-residue stretch at 25–154 folds into the FZ domain; that stretch reads DPTGKCEQYI…SSDYNLTTYG (130 aa). N-linked (GlcNAc...) asparagine glycans are attached at residues asparagine 52, asparagine 97, asparagine 149, asparagine 170, and asparagine 186. A helical membrane pass occupies residues 237–257; that stretch reads AISLVSLLCSVYLFITYMVIN. At 258–264 the chain is on the cytoplasmic side; that stretch reads PKRNKYD. The chain crosses the membrane as a helical span at residues 265–285; it reads YFFSFFVLSIILMSIAGTIGF. Over 286–308 the chain is Extracellular; that stretch reads SVGGTRKLLCPEINRRGVYTDPA. Residues 309-329 traverse the membrane as a helical segment; sequence VAAAGWIFQFAIINAILWFSI. Topologically, residues 330 to 349 are cytoplasmic; sequence NSFELWFQIKFIKRKLHLIK. A helical membrane pass occupies residues 350-370; the sequence is FYILAVLVISIALSVPLSAIG. Residues 371–391 are Extracellular-facing; the sequence is EFNAGLGNFVVWIESGKYQNW. Residues 392–412 form a helical membrane-spanning segment; that stretch reads FFWGPLGIVLTVGTTFIGLVI. Topologically, residues 413–434 are cytoplasmic; sequence WEIYKIVSSTNKSDFFKLQLKP. A helical transmembrane segment spans residues 435–455; sequence LMNMLLIYLTFVYLFGYNFYI. The Extracellular segment spans residues 456–490; sequence HNSLNGFYGSSEEFKNCIISTDGKDCRIQGPPYSS. The chain crosses the membrane as a helical span at residues 491 to 511; sequence ILMFVFCLRIYGVYCIALYGF. Residues 512 to 580 lie on the Cytoplasmic side of the membrane; the sequence is SPKTRSIWSN…SMEPDEIILR (69 aa). A Lys-Thr-X-X-X-Trp motif, mediates interaction with the PDZ domain of Dvl family members motif is present at residues 514-519; the sequence is KTRSIW. The tract at residues 542–580 is disordered; sequence TTKGGTSSTDIKMSTNNNSNMDSGGGKSSSMEPDEIILR. The span at 551 to 563 shows a compositional bias: polar residues; that stretch reads DIKMSTNNNSNMD.

The protein belongs to the G-protein coupled receptor Fz/Smo family.

It localises to the membrane. The polypeptide is Frizzled and smoothened-like protein K (fslK) (Dictyostelium discoideum (Social amoeba)).